The primary structure comprises 186 residues: Ribosome-recycling factor (186 aa).

The protein belongs to the RRF family.

The protein resides in the cytoplasm. Its function is as follows. Responsible for the release of ribosomes from messenger RNA at the termination of protein biosynthesis. May increase the efficiency of translation by recycling ribosomes from one round of translation to another. This chain is Ribosome-recycling factor, found in Rhizobium leguminosarum bv. trifolii (strain WSM2304).